Here is a 2148-residue protein sequence, read N- to C-terminus: General transcription factor 3C polypeptide 1 (2148 aa).

Acidic residues predominate over residues 473-487 (GEEAFLSDSESEEES). 2 disordered regions span residues 473–568 (GEEA…FDPH) and 587–609 (NPKEGGGSQKGGRHGSGQDKPHK). Basic residues predominate over residues 491 to 502 (GKRRGRGSRGHS). A Glycyl lysine isopeptide (Lys-Gly) (interchain with G-Cter in SUMO2) cross-link involves residue Lys533. The residue at position 666 (Ser666) is a Phosphoserine. Disordered stretches follow at residues 717 to 771 (STAN…EKMG) and 818 to 863 (TGEQ…SSWE). Basic and acidic residues-rich tracts occupy residues 759–770 (ESTRVKKTDEKM) and 825–835 (HSERKTGKQEP). Glycyl lysine isopeptide (Lys-Gly) (interchain with G-Cter in SUMO2) cross-links involve residues Lys769 and Lys832. Ser1062 is modified (phosphoserine). Over residues 1186 to 1195 (EHFELDREPT) the composition is skewed to basic and acidic residues. Disordered regions lie at residues 1186–1238 (EHFE…KKLR), 1597–1627 (KSLGKDGGLDDDDEEEDLDEGSGTKRQSVEV), 1823–1881 (KASG…LPAK), 1893–1928 (SPRPGTEEQTEAQAQFAAPEDAGAEGPRQESQESVG), and 2127–2148 (PRPSHSCYQSSAQPSTGVATSR). Phosphothreonine is present on Thr1195. The segment covering 1198–1214 (RNRKVRGGKSQKRKRLK) has biased composition (basic residues). Positions 1228–1238 (EHPEAKSKKLR) are enriched in basic and acidic residues. The span at 1605–1616 (LDDDDEEEDLDE) shows a compositional bias: acidic residues. Residues Ser1624, Ser1853, and Ser1893 each carry the phosphoserine modification. Low complexity predominate over residues 1903 to 1912 (EAQAQFAAPE). The span at 2132-2148 (SCYQSSAQPSTGVATSR) shows a compositional bias: polar residues.

It belongs to the TFIIIC subunit 1 family. Part of the TFIIIC subcomplex TFIIIC2, consisting of six subunits, GTF3C1, GTF3C2, GTF3C3, GTF3C4, GTF3C5 and GTF3C6. Interacts with IGHMBP2. Interacts with MAF1.

Its subcellular location is the nucleus. Functionally, required for RNA polymerase III-mediated transcription. Component of TFIIIC that initiates transcription complex assembly on tRNA and is required for transcription of 5S rRNA and other stable nuclear and cytoplasmic RNAs. Binds to the box B promoter element. This chain is General transcription factor 3C polypeptide 1 (Gtf3c1), found in Rattus norvegicus (Rat).